A 170-amino-acid chain; its full sequence is RNA pyrophosphohydrolase (170 aa).

The region spanning 6-149 (GFRPNVGIVI…KRDVYRRALK (144 aa)) is the Nudix hydrolase domain. The Nudix box signature appears at 38-59 (GGIDDGETPEQAMYRELYEEVG).

Belongs to the Nudix hydrolase family. RppH subfamily. The cofactor is a divalent metal cation.

Its function is as follows. Accelerates the degradation of transcripts by removing pyrophosphate from the 5'-end of triphosphorylated RNA, leading to a more labile monophosphorylated state that can stimulate subsequent ribonuclease cleavage. This Aliivibrio fischeri (strain ATCC 700601 / ES114) (Vibrio fischeri) protein is RNA pyrophosphohydrolase.